We begin with the raw amino-acid sequence, 340 residues long: Melanin-concentrating hormone receptor 2 (340 aa).

The Extracellular portion of the chain corresponds to 1–34; that stretch reads MNPFHSSCWNTSAELSNKSWNKEFAYQTASAVDT. 2 N-linked (GlcNAc...) asparagine glycosylation sites follow: N10 and N17. A helical membrane pass occupies residues 35 to 57; it reads VILPSMIGIICSTGLVGNILIVF. Over 58–69 the chain is Cytoplasmic; the sequence is TIIRSRKKTVPD. The chain crosses the membrane as a helical span at residues 70–92; it reads IYICNLAVADLVHIIGMPFLIHQ. Residues 93 to 106 are Extracellular-facing; it reads WARGGEWVFGGPLC. The chain crosses the membrane as a helical span at residues 107–129; that stretch reads TIITSLDTCNQFACSAIMTVMSV. At 130 to 149 the chain is on the cytoplasmic side; that stretch reads DRYFALVQPFRLTSWRTRYK. Residues 150 to 172 traverse the membrane as a helical segment; that stretch reads TIRINLGLWAASFILALPVWIYS. Over 173–198 the chain is Extracellular; that stretch reads KVIKFKDGVESCAFDLTSPDDVLWYT. A helical membrane pass occupies residues 199-221; that stretch reads LYLTITTFFFPLPLILVCYILIL. Topologically, residues 222–252 are cytoplasmic; the sequence is CYTWEMYQQNKDARCCNPSVPKQRVMKLTKM. A helical membrane pass occupies residues 253 to 272; it reads VLVLVAVFILSAAPYHVIQL. The Extracellular portion of the chain corresponds to 273-286; sequence VNLQMEQPTLAFYV. Residues 287-309 form a helical membrane-spanning segment; the sequence is GYYLSICLSYASSSINPFLYILL. The Cytoplasmic portion of the chain corresponds to 310–340; the sequence is SGNFQKRLPQIQRRVTDKEIKNMGNTLKSHF.

It belongs to the G-protein coupled receptor 1 family.

The protein resides in the cell membrane. In terms of biological role, receptor for melanin-concentrating hormone, coupled to G proteins that activate phosphoinositide hydrolysis. This Macaca fascicularis (Crab-eating macaque) protein is Melanin-concentrating hormone receptor 2 (MCHR2).